The following is a 303-amino-acid chain: tRNA dimethylallyltransferase (303 aa).

ATP is bound at residue 12–19; sequence GTTASGKS. Residue 14–19 coordinates substrate; it reads TASGKS. Residues 37–40 are interaction with substrate tRNA; sequence DSRQ.

Belongs to the IPP transferase family. In terms of assembly, monomer. Requires Mg(2+) as cofactor.

The enzyme catalyses adenosine(37) in tRNA + dimethylallyl diphosphate = N(6)-dimethylallyladenosine(37) in tRNA + diphosphate. In terms of biological role, catalyzes the transfer of a dimethylallyl group onto the adenine at position 37 in tRNAs that read codons beginning with uridine, leading to the formation of N6-(dimethylallyl)adenosine (i(6)A). In Synechocystis sp. (strain ATCC 27184 / PCC 6803 / Kazusa), this protein is tRNA dimethylallyltransferase.